The following is a 1448-amino-acid chain: Probable serine/threonine-protein kinase irlB (1448 aa).

A compositionally biased stretch (acidic residues) spans 412 to 423; the sequence is DDDDYDDYDDDD. A disordered region spans residues 412–446; it reads DDDDYDDYDDDDDHHSGCNNNNNNNNDGDHNEDEN. The span at 428–437 shows a compositional bias: low complexity; it reads GCNNNNNNNN. Coiled-coil stretches lie at residues 666–817, 887–921, and 974–1016; these read AESE…EIQN, EIQL…SNMK, and ENNK…QDED. Residues 975–1008 form a disordered region; it reads NNKKQNLINDNNNNNNNNNNNNNNNNNNNNNNKL. Positions 978–1008 are enriched in low complexity; the sequence is KQNLINDNNNNNNNNNNNNNNNNNNNNNNKL. In terms of domain architecture, Protein kinase spans 1027–1293; the sequence is RNESNILGRG…IQNVLNHPLF (267 aa). ATP contacts are provided by residues 1033 to 1041 and Lys-1056; that span reads LGRGSNGTL. Asp-1151 (proton acceptor) is an active-site residue. A KEN domain is found at 1296–1448; sequence LEKKIQFIDA…TIDYLFNFYN (153 aa).

This sequence belongs to the protein kinase superfamily. Ser/Thr protein kinase family.

The catalysed reaction is L-seryl-[protein] + ATP = O-phospho-L-seryl-[protein] + ADP + H(+). The enzyme catalyses L-threonyl-[protein] + ATP = O-phospho-L-threonyl-[protein] + ADP + H(+). In Dictyostelium discoideum (Social amoeba), this protein is Probable serine/threonine-protein kinase irlB (irlB-1).